A 235-amino-acid chain; its full sequence is Large ribosomal subunit protein uL1 (235 aa).

This sequence belongs to the universal ribosomal protein uL1 family. Part of the 50S ribosomal subunit.

In terms of biological role, binds directly to 23S rRNA. The L1 stalk is quite mobile in the ribosome, and is involved in E site tRNA release. Its function is as follows. Protein L1 is also a translational repressor protein, it controls the translation of the L11 operon by binding to its mRNA. This is Large ribosomal subunit protein uL1 from Prochlorococcus marinus (strain MIT 9303).